A 531-amino-acid chain; its full sequence is Probable inactive beta-glucosidase 25 (531 aa).

The first 24 residues, 1–24, serve as a signal peptide directing secretion; sequence MALKAILFLGLFLVVIVSPITVYG. Residues Q53 and 202–203 contribute to the a beta-D-glucoside site; that span reads NE. The active-site Proton donor is the E203. C222 and C230 form a disulfide bridge. Residues F348 and 477-478 each bind a beta-D-glucoside; that span reads EW.

This sequence belongs to the glycosyl hydrolase 1 family.

This is Probable inactive beta-glucosidase 25 from Arabidopsis thaliana (Mouse-ear cress).